Reading from the N-terminus, the 266-residue chain is Glutamate racemase (266 aa).

Residues 9–10 and 41–42 contribute to the substrate site; these read DS and YG. Cys72 (proton donor/acceptor) is an active-site residue. 73 to 74 contributes to the substrate binding site; the sequence is NT. Cys184 serves as the catalytic Proton donor/acceptor. 185–186 lines the substrate pocket; that stretch reads TH.

Belongs to the aspartate/glutamate racemases family.

It carries out the reaction L-glutamate = D-glutamate. It participates in cell wall biogenesis; peptidoglycan biosynthesis. In terms of biological role, provides the (R)-glutamate required for cell wall biosynthesis. This is Glutamate racemase from Staphylococcus carnosus (strain TM300).